Consider the following 234-residue polypeptide: Thiamine-phosphate synthase (234 aa).

4-amino-2-methyl-5-(diphosphooxymethyl)pyrimidine contacts are provided by residues 52-56 (QYRSK) and asparagine 84. Mg(2+) is bound by residues aspartate 85 and aspartate 104. Serine 123 is a binding site for 4-amino-2-methyl-5-(diphosphooxymethyl)pyrimidine. 2-[(2R,5Z)-2-carboxy-4-methylthiazol-5(2H)-ylidene]ethyl phosphate is bound at residue 150–152 (SVT). Lysine 153 is a binding site for 4-amino-2-methyl-5-(diphosphooxymethyl)pyrimidine. Glycine 180 serves as a coordination point for 2-[(2R,5Z)-2-carboxy-4-methylthiazol-5(2H)-ylidene]ethyl phosphate.

This sequence belongs to the thiamine-phosphate synthase family. The cofactor is Mg(2+).

The catalysed reaction is 2-[(2R,5Z)-2-carboxy-4-methylthiazol-5(2H)-ylidene]ethyl phosphate + 4-amino-2-methyl-5-(diphosphooxymethyl)pyrimidine + 2 H(+) = thiamine phosphate + CO2 + diphosphate. The enzyme catalyses 2-(2-carboxy-4-methylthiazol-5-yl)ethyl phosphate + 4-amino-2-methyl-5-(diphosphooxymethyl)pyrimidine + 2 H(+) = thiamine phosphate + CO2 + diphosphate. It carries out the reaction 4-methyl-5-(2-phosphooxyethyl)-thiazole + 4-amino-2-methyl-5-(diphosphooxymethyl)pyrimidine + H(+) = thiamine phosphate + diphosphate. It functions in the pathway cofactor biosynthesis; thiamine diphosphate biosynthesis; thiamine phosphate from 4-amino-2-methyl-5-diphosphomethylpyrimidine and 4-methyl-5-(2-phosphoethyl)-thiazole: step 1/1. Functionally, condenses 4-methyl-5-(beta-hydroxyethyl)thiazole monophosphate (THZ-P) and 2-methyl-4-amino-5-hydroxymethyl pyrimidine pyrophosphate (HMP-PP) to form thiamine monophosphate (TMP). The protein is Thiamine-phosphate synthase of Nitrosospira multiformis (strain ATCC 25196 / NCIMB 11849 / C 71).